Consider the following 135-residue polypeptide: Holo-[acyl-carrier-protein] synthase (135 aa).

Asp8 and Glu57 together coordinate Mg(2+).

Belongs to the P-Pant transferase superfamily. AcpS family. Mg(2+) is required as a cofactor.

Its subcellular location is the cytoplasm. The catalysed reaction is apo-[ACP] + CoA = holo-[ACP] + adenosine 3',5'-bisphosphate + H(+). Transfers the 4'-phosphopantetheine moiety from coenzyme A to a Ser of acyl-carrier-protein. The sequence is that of Holo-[acyl-carrier-protein] synthase from Xanthobacter autotrophicus (strain ATCC BAA-1158 / Py2).